The primary structure comprises 387 residues: GTPase Obg (387 aa).

In terms of domain architecture, Obg spans 1–159 (MKFVDEAVIR…RSLRLELMLL (159 aa)). The OBG-type G domain maps to 160–333 (ADVGLLGMPN…LALKLMDFID (174 aa)). Residues 166–173 (GMPNAGKS), 191–195 (FTTLV), 213–216 (DIPG), 283–286 (NKTD), and 314–316 (SAY) each bind GTP. The Mg(2+) site is built by Ser173 and Thr193.

Belongs to the TRAFAC class OBG-HflX-like GTPase superfamily. OBG GTPase family. Monomer. It depends on Mg(2+) as a cofactor.

It localises to the cytoplasm. Functionally, an essential GTPase which binds GTP, GDP and possibly (p)ppGpp with moderate affinity, with high nucleotide exchange rates and a fairly low GTP hydrolysis rate. Plays a role in control of the cell cycle, stress response, ribosome biogenesis and in those bacteria that undergo differentiation, in morphogenesis control. This Shewanella loihica (strain ATCC BAA-1088 / PV-4) protein is GTPase Obg.